Here is a 123-residue protein sequence, read N- to C-terminus: Small ribosomal subunit protein uS12 (123 aa).

Residues 1–32 (MPTIQQLVRKGRTDKISKNKTPALKGSPQRRG) form a disordered region. Residue Asp-89 is modified to 3-methylthioaspartic acid. Residues 103–123 (DTQGVKGRKQARSRYGAKKEK) form a disordered region. Residues 108 to 123 (KGRKQARSRYGAKKEK) are compositionally biased toward basic residues.

Belongs to the universal ribosomal protein uS12 family. Part of the 30S ribosomal subunit. Contacts proteins S8 and S17. May interact with IF1 in the 30S initiation complex.

In terms of biological role, with S4 and S5 plays an important role in translational accuracy. Its function is as follows. Interacts with and stabilizes bases of the 16S rRNA that are involved in tRNA selection in the A site and with the mRNA backbone. Located at the interface of the 30S and 50S subunits, it traverses the body of the 30S subunit contacting proteins on the other side and probably holding the rRNA structure together. The combined cluster of proteins S8, S12 and S17 appears to hold together the shoulder and platform of the 30S subunit. This Cutibacterium acnes (strain DSM 16379 / KPA171202) (Propionibacterium acnes) protein is Small ribosomal subunit protein uS12.